The chain runs to 59 residues: Large ribosomal subunit protein bL35 (59 aa).

Positions 17–43 are enriched in basic residues; sequence GQIKRKHAYTSHLAPHKSTKQKRHLRK. Residues 17–47 form a disordered region; sequence GQIKRKHAYTSHLAPHKSTKQKRHLRKQATV.

Belongs to the bacterial ribosomal protein bL35 family.

The polypeptide is Large ribosomal subunit protein bL35 (Mycoplasma genitalium (strain ATCC 33530 / DSM 19775 / NCTC 10195 / G37) (Mycoplasmoides genitalium)).